The sequence spans 116 residues: Large ribosomal subunit protein bL20c (116 aa).

Belongs to the bacterial ribosomal protein bL20 family.

Its subcellular location is the plastid. It is found in the chloroplast. In terms of biological role, binds directly to 23S ribosomal RNA and is necessary for the in vitro assembly process of the 50S ribosomal subunit. It is not involved in the protein synthesizing functions of that subunit. This Rhodomonas salina (Cryptomonas salina) protein is Large ribosomal subunit protein bL20c.